The chain runs to 353 residues: tRNA-specific 2-thiouridylase MnmA 1 (353 aa).

Residues 9–16 (AMSGGVDS) and Met35 contribute to the ATP site. The Nucleophile role is filled by Cys98. The cysteines at positions 98 and 194 are disulfide-linked. Residue Gly122 coordinates ATP. Residues 144-146 (KDQ) are interaction with tRNA. The active-site Cysteine persulfide intermediate is the Cys194. The segment at 300–301 (RY) is interaction with tRNA.

This sequence belongs to the MnmA/TRMU family.

Its subcellular location is the cytoplasm. It carries out the reaction S-sulfanyl-L-cysteinyl-[protein] + uridine(34) in tRNA + AH2 + ATP = 2-thiouridine(34) in tRNA + L-cysteinyl-[protein] + A + AMP + diphosphate + H(+). In terms of biological role, catalyzes the 2-thiolation of uridine at the wobble position (U34) of tRNA, leading to the formation of s(2)U34. This chain is tRNA-specific 2-thiouridylase MnmA 1, found in Clostridium botulinum (strain Okra / Type B1).